Reading from the N-terminus, the 312-residue chain is Mas-related G-protein coupled receptor member B3 (312 aa).

At 1–31 the chain is on the extracellular side; that stretch reads MALRTSLITTTAPDKTSLPISICIIKFQVMN. Residues 32 to 52 traverse the membrane as a helical segment; it reads LLSITISPVGMVLNIIVLWFL. Residues 53 to 67 are Cytoplasmic-facing; it reads GFQICRNAFSAYILN. The helical transmembrane segment at 68–88 threads the bilayer; it reads LAVADFLFLCSHSIFSFLIVC. At 89–106 the chain is on the extracellular side; it reads KLHYFLFYIRQLLDTVTM. Residues 107 to 127 form a helical membrane-spanning segment; it reads FAYVFGLSITTIISIECCLSI. Residues 128–140 are Cytoplasmic-facing; the sequence is MWPIWYHCQRPRH. A helical membrane pass occupies residues 141–161; the sequence is TSAVICVLLWALSLLFPALQM. The Extracellular segment spans residues 162–180; that stretch reads EKCSVLFNTFEYSWCGIIN. Residues 181-201 traverse the membrane as a helical segment; that stretch reads IISGAWLVVLFVVLCGFSLIL. Topologically, residues 202–220 are cytoplasmic; that stretch reads LLRISCGSQQIPVTRLNVT. Residues 221 to 241 form a helical membrane-spanning segment; that stretch reads IALRVLLLLIFGIPFGIFWIV. The Extracellular segment spans residues 242 to 259; it reads DKWNEENFFVRACGFSHH. A helical transmembrane segment spans residues 260–280; it reads ILYVYCINICVNATIYFLVGS. Topologically, residues 281 to 312 are cytoplasmic; that stretch reads IRHGKFQKMTLKLILQRAIQGTPEEEGGERGP.

This sequence belongs to the G-protein coupled receptor 1 family. Mas subfamily.

It is found in the membrane. Orphan receptor. Probably involved in the function of nociceptive neurons. May regulate nociceptor function and/or development, including the sensation or modulation of pain. The polypeptide is Mas-related G-protein coupled receptor member B3 (Mrgprb3) (Mus musculus (Mouse)).